Consider the following 491-residue polypeptide: Probable glycine dehydrogenase (decarboxylating) subunit 2 (491 aa).

At K264 the chain carries N6-(pyridoxal phosphate)lysine.

Belongs to the GcvP family. C-terminal subunit subfamily. As to quaternary structure, the glycine cleavage system is composed of four proteins: P, T, L and H. In this organism, the P 'protein' is a heterodimer of two subunits. It depends on pyridoxal 5'-phosphate as a cofactor.

The catalysed reaction is N(6)-[(R)-lipoyl]-L-lysyl-[glycine-cleavage complex H protein] + glycine + H(+) = N(6)-[(R)-S(8)-aminomethyldihydrolipoyl]-L-lysyl-[glycine-cleavage complex H protein] + CO2. Its function is as follows. The glycine cleavage system catalyzes the degradation of glycine. The P protein binds the alpha-amino group of glycine through its pyridoxal phosphate cofactor; CO(2) is released and the remaining methylamine moiety is then transferred to the lipoamide cofactor of the H protein. This Coxiella burnetii (strain CbuK_Q154) (Coxiella burnetii (strain Q154)) protein is Probable glycine dehydrogenase (decarboxylating) subunit 2.